The chain runs to 872 residues: Alanine--tRNA ligase (872 aa).

The Zn(2+) site is built by H558, H562, C660, and H664.

It belongs to the class-II aminoacyl-tRNA synthetase family. Zn(2+) serves as cofactor.

Its subcellular location is the cytoplasm. It carries out the reaction tRNA(Ala) + L-alanine + ATP = L-alanyl-tRNA(Ala) + AMP + diphosphate. Catalyzes the attachment of alanine to tRNA(Ala) in a two-step reaction: alanine is first activated by ATP to form Ala-AMP and then transferred to the acceptor end of tRNA(Ala). Also edits incorrectly charged Ser-tRNA(Ala) and Gly-tRNA(Ala) via its editing domain. This Chlamydia pneumoniae (Chlamydophila pneumoniae) protein is Alanine--tRNA ligase.